The following is a 495-amino-acid chain: MAKCNAVAGFNALNGVQLNLFTTDELKAIHYATMEVLMDPGIQVSDPEARQIFKENGCEVNEQTNVVKIPEYLVRRALQLAPSRFVLWGRDKKYNTVQEAGGKVHWTCFGTGVKMCKYQEGKYVTVDSVEQDIADIAKLCDWAENIDYFSLPVSARDIAGQGAQDVHETFTPLTNTAKHFHHIDPVGENVEYYRDIVNAYYGGDEEEARKKPIFSMLLCPTSPLELSVNACQVIIKGARFGMPVNVLSMAMSGGSSPVYLAGTLVTHNAEVLAGITLAQLTVPGAKVWYGSSTTTFDLKKGTAPVGSPELGLISASVAKLAQFYGLPAFVAGTOSDAKIPDNQAGHEKTMTCLLPALAGANTLYGAGMLELGMTFSMEQLVIDNDIIKMTKKALQGVPVNEETLAVESIQKVGIGNNFLALKQTRQLVNYPSDPMLIDRRMFGDWAAAGSKDLAAAAHEKVVDVLKNHVVKPIDADILKDMKAVVDKADKAFRGM.

A non-standard amino acid (pyrrolysine) is located at residue Pyl-334.

Belongs to the trimethylamine methyltransferase family. Can form a complex with MttC.

It carries out the reaction Co(I)-[trimethylamine-specific corrinoid protein] + trimethylamine + H(+) = methyl-Co(III)-[trimethylamine-specific corrinoid protein] + dimethylamine. The protein operates within one-carbon metabolism; methanogenesis from trimethylamine. Functionally, catalyzes the transfer of a methyl group from trimethylamine to the corrinoid cofactor of MttC. The chain is Trimethylamine methyltransferase MttB1 (mttB1) from Methanosarcina mazei (strain ATCC BAA-159 / DSM 3647 / Goe1 / Go1 / JCM 11833 / OCM 88) (Methanosarcina frisia).